Reading from the N-terminus, the 142-residue chain is Large ribosomal subunit protein uL13 (142 aa).

Belongs to the universal ribosomal protein uL13 family. As to quaternary structure, part of the 50S ribosomal subunit.

In terms of biological role, this protein is one of the early assembly proteins of the 50S ribosomal subunit, although it is not seen to bind rRNA by itself. It is important during the early stages of 50S assembly. This Francisella tularensis subsp. holarctica (strain FTNF002-00 / FTA) protein is Large ribosomal subunit protein uL13.